Here is a 652-residue protein sequence, read N- to C-terminus: DNA ligase (652 aa).

NAD(+) contacts are provided by residues 29-33 (DSDYD), 78-79 (SL), and Glu107. Lys109 acts as the N6-AMP-lysine intermediate in catalysis. Residues Arg130, Glu164, Lys278, and Lys302 each coordinate NAD(+). Residues Cys395, Cys398, Cys413, and Cys418 each coordinate Zn(2+). A BRCT domain is found at 577–652 (NSDAALFGLT…IEDEDWLRQL (76 aa)).

This sequence belongs to the NAD-dependent DNA ligase family. LigA subfamily. Mg(2+) serves as cofactor. Mn(2+) is required as a cofactor.

The catalysed reaction is NAD(+) + (deoxyribonucleotide)n-3'-hydroxyl + 5'-phospho-(deoxyribonucleotide)m = (deoxyribonucleotide)n+m + AMP + beta-nicotinamide D-nucleotide.. Its function is as follows. DNA ligase that catalyzes the formation of phosphodiester linkages between 5'-phosphoryl and 3'-hydroxyl groups in double-stranded DNA using NAD as a coenzyme and as the energy source for the reaction. It is essential for DNA replication and repair of damaged DNA. The polypeptide is DNA ligase (Streptococcus pyogenes serotype M1).